An 831-amino-acid chain; its full sequence is Probable glucan 1,3-beta-glucosidase D (831 aa).

6 stretches are compositionally biased toward basic and acidic residues: residues 1–24, 44–56, 79–93, 102–115, 137–151, and 198–213; these read MPSH…YREV, RRDD…RSHE, RSHD…RSRA, SRRD…EYRR, RDGQ…DREA, and QRER…LESK. Disordered regions lie at residues 1–179 and 192–241; these read MPSH…SGSH and HYDE…GQSK. The Cytoplasmic portion of the chain corresponds to 1 to 297; the sequence is MPSHSRSRDR…AQPPFWKRKK (297 aa). The helical; Signal-anchor for type II membrane protein transmembrane segment at 298–318 threads the bilayer; that stretch reads WWIVIGVLVVVLAIVIPVAVV. Residues 319–831 lie on the Extracellular side of the membrane; that stretch reads MSKKHGHDDD…PSFGDLPEYY (513 aa). N-linked (GlcNAc...) asparagine glycans are attached at residues asparagine 376, asparagine 381, asparagine 393, asparagine 410, asparagine 442, asparagine 546, and asparagine 558. The Proton donor role is filled by glutamate 597. N-linked (GlcNAc...) asparagine glycosylation is found at asparagine 610, asparagine 636, asparagine 669, and asparagine 689. The active-site Nucleophile is the glutamate 702.

This sequence belongs to the glycosyl hydrolase 5 (cellulase A) family.

It localises to the cell membrane. The enzyme catalyses Successive hydrolysis of beta-D-glucose units from the non-reducing ends of (1-&gt;3)-beta-D-glucans, releasing alpha-glucose.. Glucosidase involved in the degradation of cellulosic biomass. Active on lichenan. This is Probable glucan 1,3-beta-glucosidase D (exgD) from Aspergillus flavus (strain ATCC 200026 / FGSC A1120 / IAM 13836 / NRRL 3357 / JCM 12722 / SRRC 167).